We begin with the raw amino-acid sequence, 102 residues long: Small ribosomal subunit protein uS10 (102 aa).

It belongs to the universal ribosomal protein uS10 family. As to quaternary structure, part of the 30S ribosomal subunit.

Involved in the binding of tRNA to the ribosomes. The sequence is that of Small ribosomal subunit protein uS10 from Geobacter metallireducens (strain ATCC 53774 / DSM 7210 / GS-15).